Here is a 335-residue protein sequence, read N- to C-terminus: Ethanol acetyltransferase 1 (335 aa).

An AB hydrolase-1 domain is found at 48–300 (PIVFVHGIFG…NSAHDILDQR (253 aa)). Catalysis depends on charge relay system residues Ser-121, Asp-145, and His-294.

The protein belongs to the AB hydrolase superfamily.

It is found in the mitochondrion. It carries out the reaction ethanol + acetyl-CoA = ethyl acetate + CoA. It catalyses the reaction acetyl-CoA + H2O = acetate + CoA + H(+). The catalysed reaction is ethyl acetate + H2O = ethanol + acetate + H(+). Alcohol acetyltransferase that catalyzes the synthesis of ethyl acetate from ethanol and acetyl-CoA. Can also function as a thioesterase by hydrolyzing acetyl-CoA in the absence of ethanol, as well as esterase hydrolyzing ethyl acetate. In Cyberlindnera fabianii (Yeast), this protein is Ethanol acetyltransferase 1 (EAT1).